The primary structure comprises 134 residues: Small ribosomal subunit protein uS8c (134 aa).

It belongs to the universal ribosomal protein uS8 family. As to quaternary structure, part of the 30S ribosomal subunit.

Its subcellular location is the plastid. It localises to the chloroplast. Its function is as follows. One of the primary rRNA binding proteins, it binds directly to 16S rRNA central domain where it helps coordinate assembly of the platform of the 30S subunit. The chain is Small ribosomal subunit protein uS8c (rps8) from Phaseolus vulgaris (Kidney bean).